The sequence spans 126 residues: Bactofilin BacO (126 aa).

This sequence belongs to the bactofilin family. In terms of assembly, interacts with BacN and probably also BacP, the 3 proteins colocalize as an extended structure. Interacts with PadC.

It localises to the cytoplasm. Its subcellular location is the cytoskeleton. Its function is as follows. A non-essential component of the chromosome segregation machinery. Positions the ParA-ParB-parS chromosome segregation machinery within the cell; BacP seems to be the most important bactofilin in this process. Forms a heteropolymeric, subpolar scaffold in the cell; BacP probably forms the core, BacO contributes to position and integrity while BacN does not seem to contribute to assembly. This chain is Bactofilin BacO, found in Myxococcus xanthus (strain DK1622).